A 494-amino-acid polypeptide reads, in one-letter code: Ketol-acid reductoisomerase (NADP(+)) (494 aa).

A KARI N-terminal Rossmann domain is found at 14 to 208 (LDQLGRCRFM…GGHRAGCLES (195 aa)). NADP(+) is bound by residues 45-48 (CGAQ), Arg68, Arg76, Ser78, and 108-110 (DKQ). His132 is an active-site residue. Gly158 provides a ligand contact to NADP(+). KARI C-terminal knotted domains are found at residues 209 to 344 (SFVA…NYPA) and 345 to 487 (SDVE…MSDM). Asp217, Glu221, Glu389, and Glu393 together coordinate Mg(2+). Ser414 contacts substrate.

This sequence belongs to the ketol-acid reductoisomerase family. It depends on Mg(2+) as a cofactor.

The enzyme catalyses (2R)-2,3-dihydroxy-3-methylbutanoate + NADP(+) = (2S)-2-acetolactate + NADPH + H(+). It carries out the reaction (2R,3R)-2,3-dihydroxy-3-methylpentanoate + NADP(+) = (S)-2-ethyl-2-hydroxy-3-oxobutanoate + NADPH + H(+). The protein operates within amino-acid biosynthesis; L-isoleucine biosynthesis; L-isoleucine from 2-oxobutanoate: step 2/4. It functions in the pathway amino-acid biosynthesis; L-valine biosynthesis; L-valine from pyruvate: step 2/4. In terms of biological role, involved in the biosynthesis of branched-chain amino acids (BCAA). Catalyzes an alkyl-migration followed by a ketol-acid reduction of (S)-2-acetolactate (S2AL) to yield (R)-2,3-dihydroxy-isovalerate. In the isomerase reaction, S2AL is rearranged via a Mg-dependent methyl migration to produce 3-hydroxy-3-methyl-2-ketobutyrate (HMKB). In the reductase reaction, this 2-ketoacid undergoes a metal-dependent reduction by NADPH to yield (R)-2,3-dihydroxy-isovalerate. The sequence is that of Ketol-acid reductoisomerase (NADP(+)) from Vibrio atlanticus (strain LGP32) (Vibrio splendidus (strain Mel32)).